A 369-amino-acid polypeptide reads, in one-letter code: DNA replication and repair protein RecF (369 aa).

Position 30–37 (30–37) interacts with ATP; sequence GDNGSGKT.

This sequence belongs to the RecF family.

The protein localises to the cytoplasm. Functionally, the RecF protein is involved in DNA metabolism; it is required for DNA replication and normal SOS inducibility. RecF binds preferentially to single-stranded, linear DNA. It also seems to bind ATP. The sequence is that of DNA replication and repair protein RecF from Pseudomonas paraeruginosa (strain DSM 24068 / PA7) (Pseudomonas aeruginosa (strain PA7)).